The chain runs to 192 residues: MFNKTLLGLTVGALMFTAGSAVAAEYKIDKEGQHAFIEFRIKHLGYSWLYGSFNDFDGSFTFDEKNPAADKVNVVINTNSVDTNHAERDKHLRSKEFLNVGKFPQATFTSTEVKKNAEGYTVVGNLTLNGVTKPVTLESKLTGQGNDPWGGYRAGFEANGNIKLKDFNITTDLGPASQEVELILSVEGVRAK.

The signal sequence occupies residues 1 to 23 (MFNKTLLGLTVGALMFTAGSAVA).

This sequence belongs to the UPF0312 family. Type 1 subfamily.

The protein resides in the periplasm. This is UPF0312 protein YE1254 from Yersinia enterocolitica serotype O:8 / biotype 1B (strain NCTC 13174 / 8081).